The chain runs to 87 residues: uncharacterized protein (87 aa).

Positions 1 to 19 (MLVLQLAVLVTAVYAFVHA) are cleaved as a signal peptide. Residues 51-71 (ILGFVFGVLGIVIAACAAGVY) form a helical membrane-spanning segment.

The protein to M.tuberculosis Rv0476.

The protein localises to the membrane. This is an uncharacterized protein from Mycobacterium leprae (strain TN).